The primary structure comprises 543 residues: Chaperonin GroEL (543 aa).

ATP-binding positions include 29 to 32 (TLGP), lysine 50, 86 to 90 (DGTTT), glycine 415, and aspartate 495.

This sequence belongs to the chaperonin (HSP60) family. In terms of assembly, forms a cylinder of 14 subunits composed of two heptameric rings stacked back-to-back. Interacts with the co-chaperonin GroES.

It localises to the cytoplasm. The enzyme catalyses ATP + H2O + a folded polypeptide = ADP + phosphate + an unfolded polypeptide.. Functionally, together with its co-chaperonin GroES, plays an essential role in assisting protein folding. The GroEL-GroES system forms a nano-cage that allows encapsulation of the non-native substrate proteins and provides a physical environment optimized to promote and accelerate protein folding. This is Chaperonin GroEL from Flavobacterium johnsoniae (strain ATCC 17061 / DSM 2064 / JCM 8514 / BCRC 14874 / CCUG 350202 / NBRC 14942 / NCIMB 11054 / UW101) (Cytophaga johnsonae).